The primary structure comprises 27 residues: uncharacterized protein (27 aa).

Residues 6–26 (IIVLGALIALLELIRFLLQLL) traverse the membrane as a helical segment.

This sequence belongs to the DinQ family.

Its subcellular location is the cell inner membrane. This is an uncharacterized protein from Escherichia coli (strain K12).